We begin with the raw amino-acid sequence, 270 residues long: Tetraspanin-17 (270 aa).

Residues 1–19 lie on the Cytoplasmic side of the membrane; that stretch reads MPGKHQQFQDPEVGCCGKY. A helical transmembrane segment spans residues 20–40; it reads FLFGFNIVFWVLGALFLAIGL. The Extracellular segment spans residues 41 to 63; that stretch reads WAWGEKGVLSNISGLTDLGGLDP. Residue Asn-51 is glycosylated (N-linked (GlcNAc...) asparagine). Residues 64–84 traverse the membrane as a helical segment; the sequence is VWLFVVIGGIMSVLGFAGCIG. Topologically, residues 85-94 are cytoplasmic; that stretch reads ALRENTFLLK. The chain crosses the membrane as a helical span at residues 95-115; that stretch reads FFSVFLGLIFFLELAAGILAF. At 116–234 the chain is on the extracellular side; it reads VFKDWIRDQL…GQFEKWLQDN (119 aa). Intrachain disulfides connect Cys-155–Cys-223, Cys-156–Cys-188, Cys-172–Cys-182, and Cys-189–Cys-202. Asn-171 is a glycosylation site (N-linked (GlcNAc...) asparagine). Residues 235-255 form a helical membrane-spanning segment; the sequence is LIVVAGVLVAIALLQICGICL. Over 256–270 the chain is Cytoplasmic; that stretch reads AQNLVSDIEAVKANW.

It belongs to the tetraspanin (TM4SF) family. As to quaternary structure, interacts with ADAM10; the interaction influences ADAM10 substrate specificity, endocytosis and turnover.

It localises to the cell membrane. Part of TspanC8 subgroup, composed of 6 members that interact with the transmembrane metalloprotease ADAM10. This interaction is required for ADAM10 exit from the endoplasmic reticulum and for enzymatic maturation and trafficking to the cell surface as well as substrate specificity. Different TspanC8/ADAM10 complexes have distinct substrates. Seems to regulate VE-cadherin expression in endothelial cells probably through interaction with ADAM10, promoting leukocyte transmigration. This chain is Tetraspanin-17 (Tspan17), found in Rattus norvegicus (Rat).